The primary structure comprises 512 residues: ATP synthase subunit alpha (512 aa).

Residue 169–176 participates in ATP binding; it reads GDRQTGKT.

This sequence belongs to the ATPase alpha/beta chains family. In terms of assembly, F-type ATPases have 2 components, CF(1) - the catalytic core - and CF(0) - the membrane proton channel. CF(1) has five subunits: alpha(3), beta(3), gamma(1), delta(1), epsilon(1). CF(0) has three main subunits: a(1), b(2) and c(9-12). The alpha and beta chains form an alternating ring which encloses part of the gamma chain. CF(1) is attached to CF(0) by a central stalk formed by the gamma and epsilon chains, while a peripheral stalk is formed by the delta and b chains.

Its subcellular location is the cell inner membrane. It catalyses the reaction ATP + H2O + 4 H(+)(in) = ADP + phosphate + 5 H(+)(out). Produces ATP from ADP in the presence of a proton gradient across the membrane. The alpha chain is a regulatory subunit. This is ATP synthase subunit alpha from Leptothrix cholodnii (strain ATCC 51168 / LMG 8142 / SP-6) (Leptothrix discophora (strain SP-6)).